The primary structure comprises 394 residues: Cell division protein FtsZ (394 aa).

GTP contacts are provided by residues 21 to 25 (GGGNN), 108 to 110 (GTG), Glu139, Arg143, and Asp187. Positions 317–394 (DKPSSQGRKA…EERRSRRTRR (78 aa)) are disordered. Composition is skewed to low complexity over residues 328–346 (STGF…SGAS) and 353–364 (SAHTSHSQSSES). The segment covering 365–388 (VNERSHTTKDDDIPSFIRNREERR) has biased composition (basic and acidic residues).

Belongs to the FtsZ family. As to quaternary structure, homodimer. Polymerizes to form a dynamic ring structure in a strictly GTP-dependent manner. Interacts directly with several other division proteins.

Its subcellular location is the cytoplasm. Essential cell division protein that forms a contractile ring structure (Z ring) at the future cell division site. The regulation of the ring assembly controls the timing and the location of cell division. One of the functions of the FtsZ ring is to recruit other cell division proteins to the septum to produce a new cell wall between the dividing cells. Binds GTP and shows GTPase activity. In Staphylococcus epidermidis (strain ATCC 12228 / FDA PCI 1200), this protein is Cell division protein FtsZ.